Reading from the N-terminus, the 337-residue chain is Transcription factor HBI1 (337 aa).

The tract at residues V119–L180 is disordered. Residues K126–M151 are compositionally biased toward basic and acidic residues. The span at K152 to D165 shows a compositional bias: polar residues. Residues Q191–L241 form the bHLH domain.

In terms of assembly, homodimer. Interacts with IBH1. Highly expressed in hypocotyls and cotyledons. Expressed in leaves, stems, and flowers.

Its subcellular location is the nucleus. Functionally, atypical bHLH transcription factor that acts as a positive regulator of cell elongation downstream of multiple external and endogenous signals by direct binding to the promoters and activation of the two expansin genes EXPA1 and EXPA8, encoding cell wall loosening enzymes. Transcriptional activity is inhibited when binding to the bHLH transcription factor IBH1. In Arabidopsis thaliana (Mouse-ear cress), this protein is Transcription factor HBI1 (HBI1).